The sequence spans 241 residues: Ureidoacrylate amidohydrolase RutB (241 aa).

The active-site Proton acceptor is Asp-38. Lys-147 is a catalytic residue. Cys-180 functions as the Nucleophile in the catalytic mechanism.

It belongs to the isochorismatase family. RutB subfamily.

It catalyses the reaction (Z)-3-ureidoacrylate + H2O + H(+) = (Z)-3-aminoacrylate + NH4(+) + CO2. The enzyme catalyses (Z)-3-ureidoacrylate + H2O = (Z)-3-aminoacrylate + carbamate + H(+). It carries out the reaction (Z)-2-methylureidoacrylate + H2O + H(+) = (Z)-2-methylaminoacrylate + NH4(+) + CO2. Its function is as follows. Hydrolyzes ureidoacrylate to form aminoacrylate and carbamate. The carbamate hydrolyzes spontaneously, thereby releasing one of the nitrogen atoms of the pyrimidine ring as ammonia and one of its carbon atoms as CO2. The chain is Ureidoacrylate amidohydrolase RutB from Haliangium ochraceum (strain DSM 14365 / JCM 11303 / SMP-2).